Here is a 177-residue protein sequence, read N- to C-terminus: Adenine phosphoribosyltransferase (177 aa).

Belongs to the purine/pyrimidine phosphoribosyltransferase family. As to quaternary structure, homodimer.

Its subcellular location is the cytoplasm. The catalysed reaction is AMP + diphosphate = 5-phospho-alpha-D-ribose 1-diphosphate + adenine. The protein operates within purine metabolism; AMP biosynthesis via salvage pathway; AMP from adenine: step 1/1. Its function is as follows. Catalyzes a salvage reaction resulting in the formation of AMP, that is energically less costly than de novo synthesis. The protein is Adenine phosphoribosyltransferase of Synechococcus sp. (strain RCC307).